Here is a 379-residue protein sequence, read N- to C-terminus: Glucose-insensitive transcription protein 7 (379 aa).

The 92-residue stretch at 181-272 folds into the CS domain; sequence SNRIRYDWSQ…VSEIKWEALV (92 aa). The region spanning 292-379 is the SGS domain; that stretch reads ASGNTKNKAK…PPQGMEPKKF (88 aa). The tract at residues 345-379 is disordered; that stretch reads SYTESNGTALSTNWKDVKSKTFETKPPQGMEPKKF. Residues 346–358 are compositionally biased toward polar residues; that stretch reads YTESNGTALSTNW.

Functionally, involved in cyclic AMP (cAMP) pathway, possibly by participating in the assembly or the conformational activation of specific multiprotein complexes. In Schizosaccharomyces pombe (strain 972 / ATCC 24843) (Fission yeast), this protein is Glucose-insensitive transcription protein 7 (git7).